Consider the following 380-residue polypeptide: Chaperone protein DnaJ (380 aa).

The J domain maps to 5 to 70 (DYYEVLGVAK…QKRAAYDQYG (66 aa)). The CR-type zinc-finger motif lies at 140–218 (GYDTQIRVPS…CHGAGKVKET (79 aa)). Zn(2+)-binding residues include C153, C156, C170, C173, C192, C195, C206, and C209. 4 CXXCXGXG motif repeats span residues 153 to 160 (CEVCHGSG), 170 to 177 (CPTCSGSG), 192 to 199 (CPKCHGTG), and 206 to 213 (CGHCHGAG).

This sequence belongs to the DnaJ family. In terms of assembly, homodimer. The cofactor is Zn(2+).

The protein localises to the cytoplasm. Its function is as follows. Participates actively in the response to hyperosmotic and heat shock by preventing the aggregation of stress-denatured proteins and by disaggregating proteins, also in an autonomous, DnaK-independent fashion. Unfolded proteins bind initially to DnaJ; upon interaction with the DnaJ-bound protein, DnaK hydrolyzes its bound ATP, resulting in the formation of a stable complex. GrpE releases ADP from DnaK; ATP binding to DnaK triggers the release of the substrate protein, thus completing the reaction cycle. Several rounds of ATP-dependent interactions between DnaJ, DnaK and GrpE are required for fully efficient folding. Also involved, together with DnaK and GrpE, in the DNA replication of plasmids through activation of initiation proteins. This Paraburkholderia xenovorans (strain LB400) protein is Chaperone protein DnaJ.